The chain runs to 420 residues: D-tagatose-1,6-bisphosphate aldolase subunit GatZ (420 aa).

It belongs to the GatZ/KbaZ family. GatZ subfamily. In terms of assembly, forms a complex with GatY.

Its pathway is carbohydrate metabolism; D-tagatose 6-phosphate degradation; D-glyceraldehyde 3-phosphate and glycerone phosphate from D-tagatose 6-phosphate: step 2/2. Functionally, component of the tagatose-1,6-bisphosphate aldolase GatYZ that is required for full activity and stability of the Y subunit. Could have a chaperone-like function for the proper and stable folding of GatY. When expressed alone, GatZ does not show any aldolase activity. Is involved in the catabolism of galactitol. In Escherichia coli O17:K52:H18 (strain UMN026 / ExPEC), this protein is D-tagatose-1,6-bisphosphate aldolase subunit GatZ.